The sequence spans 763 residues: Nibrin (763 aa).

In terms of domain architecture, FHA spans 22–81 (YVVGRKNCAILIPEDQSISRCHATLSVSHPSANLGQTNAASVLSIKDSSKYGTTVNGDKM). 2 BRCT domains span residues 102 to 179 (SKYR…CELL) and 215 to 324 (KRKS…NPRR). 3 disordered regions span residues 389–496 (VKET…SSQT), 535–593 (SKAA…SEIE), and 738–763 (QTQQ…KRRR). A compositionally biased stretch (basic and acidic residues) spans 423-433 (LFREDETDTRK). Polar residues predominate over residues 434 to 443 (NTPSLLPTKS). The Nuclear localization signal motif lies at 469-474 (AKKRDR). Residues 473-482 (DRAEDEKEAS) are compositionally biased toward basic and acidic residues. Basic and acidic residues predominate over residues 742-752 (VREESLAEDLF). A FxF/Y motif motif is present at residues 748-757 (AEDLFRYNPK).

It belongs to the Nibrin family. In terms of assembly, component of the MRN complex composed of two heterodimers rad50 and mre11 associated with a single nbn.

It is found in the nucleus. Its subcellular location is the chromosome. It localises to the PML body. The protein localises to the telomere. In terms of biological role, component of the MRN complex, which plays a central role in double-strand break (DSB) repair, DNA recombination, maintenance of telomere integrity and meiosis. The MRN complex is involved in the repair of DNA double-strand breaks (DSBs) via homologous recombination (HR), an error-free mechanism which primarily occurs during S and G2 phases. The complex (1) mediates the end resection of damaged DNA, which generates proper single-stranded DNA, a key initial steps in HR, and is (2) required for the recruitment of other repair factors and efficient activation of ATM and ATR upon DNA damage. The MRN complex possesses single-strand endonuclease activity and double-strand-specific 3'-5' exonuclease activity, which are provided by MRE11, to initiate end resection, which is required for single-strand invasion and recombination. Within the MRN complex, nbn acts as a protein-protein adapter, which specifically recognizes and binds phosphorylated proteins, promoting their recruitment to DNA damage sites. Recruits mre11 and rad50 components of the MRN complex to DSBs in response to DNA damage. Promotes the recruitment of PI3/PI4-kinase family members atm, atr, and probably DNA-PKcs to the DNA damage sites, activating their functions. Mediates the recruitment of phosphorylated rbbp8/CtIP to DSBs, leading to cooperation between the MRN complex and rbbp8/CtIP to initiate end resection. The MRN complex promotes recruitment of topbp1 to DNA damage sites. The MRN complex and rbbp8/CtIP are also required for chromosome alignment during metaphase. This Xenopus laevis (African clawed frog) protein is Nibrin.